We begin with the raw amino-acid sequence, 264 residues long: Thymidylate synthase 2 (264 aa).

A dUMP-binding site is contributed by Arg-21. His-51 serves as a coordination point for (6R)-5,10-methylene-5,6,7,8-tetrahydrofolate. A dUMP-binding site is contributed by 126–127; it reads RR. The Nucleophile role is filled by Cys-146. Residues 166–169, Asn-177, and 207–209 contribute to the dUMP site; these read RSAD and HIY. (6R)-5,10-methylene-5,6,7,8-tetrahydrofolate is bound at residue Asp-169. Residue Ser-263 coordinates (6R)-5,10-methylene-5,6,7,8-tetrahydrofolate.

The protein belongs to the thymidylate synthase family. Bacterial-type ThyA subfamily. Homodimer.

Its subcellular location is the cytoplasm. It carries out the reaction dUMP + (6R)-5,10-methylene-5,6,7,8-tetrahydrofolate = 7,8-dihydrofolate + dTMP. It participates in pyrimidine metabolism; dTTP biosynthesis. Its function is as follows. Catalyzes the reductive methylation of 2'-deoxyuridine-5'-monophosphate (dUMP) to 2'-deoxythymidine-5'-monophosphate (dTMP) while utilizing 5,10-methylenetetrahydrofolate (mTHF) as the methyl donor and reductant in the reaction, yielding dihydrofolate (DHF) as a by-product. This enzymatic reaction provides an intracellular de novo source of dTMP, an essential precursor for DNA biosynthesis. This Bacillus subtilis (strain 168) protein is Thymidylate synthase 2.